A 392-amino-acid polypeptide reads, in one-letter code: Phosphoglycerate kinase (392 aa).

Substrate-binding positions include 19–21 (DYN), Arg34, 57–60 (HLGR), Arg116, and Arg149. ATP is bound by residues Lys199, Glu321, and 347–350 (GGDS).

Belongs to the phosphoglycerate kinase family. Monomer.

It localises to the cytoplasm. The catalysed reaction is (2R)-3-phosphoglycerate + ATP = (2R)-3-phospho-glyceroyl phosphate + ADP. It participates in carbohydrate degradation; glycolysis; pyruvate from D-glyceraldehyde 3-phosphate: step 2/5. This is Phosphoglycerate kinase from Thermomicrobium roseum (strain ATCC 27502 / DSM 5159 / P-2).